Here is a 953-residue protein sequence, read N- to C-terminus: Isoleucine--tRNA ligase (953 aa).

The short motif at 57-67 is the 'HIGH' region element; it reads PYANGDIHIGH. Glu-582 is a binding site for L-isoleucyl-5'-AMP. The 'KMSKS' region signature appears at 623–627; that stretch reads KMSKS. Lys-626 lines the ATP pocket. 4 residues coordinate Zn(2+): Cys-916, Cys-919, Cys-936, and Cys-939.

The protein belongs to the class-I aminoacyl-tRNA synthetase family. IleS type 1 subfamily. In terms of assembly, monomer. The cofactor is Zn(2+).

The protein localises to the cytoplasm. The enzyme catalyses tRNA(Ile) + L-isoleucine + ATP = L-isoleucyl-tRNA(Ile) + AMP + diphosphate. Functionally, catalyzes the attachment of isoleucine to tRNA(Ile). As IleRS can inadvertently accommodate and process structurally similar amino acids such as valine, to avoid such errors it has two additional distinct tRNA(Ile)-dependent editing activities. One activity is designated as 'pretransfer' editing and involves the hydrolysis of activated Val-AMP. The other activity is designated 'posttransfer' editing and involves deacylation of mischarged Val-tRNA(Ile). The sequence is that of Isoleucine--tRNA ligase from Bordetella petrii (strain ATCC BAA-461 / DSM 12804 / CCUG 43448).